The sequence spans 420 residues: Probable secreted beta-glucosidase SUN4 (420 aa).

The first 24 residues, 1–24 (MKLSATTLTAASLIGYSTIVSALP), serve as a signal peptide directing secretion. Residues 89–145 (TKSSSKVASSSESTEQIATTSSSAQTTLTSSETSTSESSVPISTSGSASTSSAASSA) form a disordered region. N-linked (GlcNAc...) asparagine glycosylation occurs at N395.

Belongs to the SUN family. Post-translationally, glycosylated.

It is found in the secreted. Its subcellular location is the cell wall. In terms of biological role, involved in the remodeling of the cell wall during the various phases of yeast culture development and under various environmental conditions and plays a role in septation. This is Probable secreted beta-glucosidase SUN4 (SUN4) from Saccharomyces cerevisiae (strain ATCC 204508 / S288c) (Baker's yeast).